The sequence spans 809 residues: METSSIEINELPLATKTQTPPASVEPIPMETSSIDELPSSDSNATDNIEAVGEKRKRADEDEKTNLESSDTKITTPSPWWKTSLCSYFRREASCSHGNECKYAHGEAELRMKPDNTWDPTSERGKKAKAMKMSEHEEKEEDEVLFTEQMMESIDGDEGGGGSVSVVDLSLSKCLVHLPNKWQSDELKKFLGEQGVLYKSAKKRRGMIVGFVTFENAEQLQSGVEILDGKTVNSSNLKIADVLPRTFDKNDARKSVKSARDAVTPLAYLSYADQLEQKKTSIGQMLKKLARNARKACPNGNSLPQWVLTSRDRGGLACNLEGIIESPITNGYRNKCEFSVGLSLQGKPTVGFSLGSFCAGVTAVEEPVDCPNVSKIASQYASIFQKFIENSKFQVWNRFQHSGFWRQLTVREGRKPGVFSNDEDAITRIAEVMLMVQVCLTGSDEAEVATEFEELAKAFAEGARASSPTLPLTVLVVQNHSGISNVAPPDAPLQVLAIPISDNGTDQEQTTNVLTEARIHDHINNLRFSISPTAFFQVNTVTAEKLYSIAGDWADLGPDTLLFDVCCGTGTIGLTLAHRVGMVIGIEMNASAVADAERNATINGISNCKFICSKAEDVMSSLLKQYLDVTQMEEAKPLSNANDDLNKQIPSTEEMTNSEHVADQNLPPSNTQVEELQDNEQKDSSSLEPEKTTKPQFKNVVAIVDPPRSGLHPAVIKALRTHPRLKRLVYISCNPETLVANAIELCTPSFDEPDRGNKNYRGRKKIGIAALARHRAKSMPTSEAFRPVKAMAVDLFPHTDHCEMVMLLER.

M1 is modified (N-acetylmethionine). A disordered region spans residues 1 to 74; it reads METSSIEINE…NLESSDTKIT (74 aa). Positions 30–46 are enriched in polar residues; sequence ETSSIDELPSSDSNATD. Over residues 51–65 the composition is skewed to basic and acidic residues; sequence VGEKRKRADEDEKTN. The C3H1-type zinc finger occupies 79–107; that stretch reads WWKTSLCSYFRREASCSHGNECKYAHGEA. Residues Q536 and E586 each coordinate S-adenosyl-L-methionine. Residues 652-693 are disordered; it reads EEMTNSEHVADQNLPPSNTQVEELQDNEQKDSSSLEPEKTTK. Basic and acidic residues predominate over residues 678 to 692; that stretch reads NEQKDSSSLEPEKTT. D704 is an S-adenosyl-L-methionine binding site. The active-site Nucleophile is C732.

The protein belongs to the class I-like SAM-binding methyltransferase superfamily. RNA M5U methyltransferase family.

This Arabidopsis thaliana (Mouse-ear cress) protein is Zinc finger CCCH domain-containing protein 24.